A 184-amino-acid chain; its full sequence is Transcription termination/antitermination protein NusG (184 aa).

Residues 133-163 form the KOW domain; it reads EGDQVRVVSGPFADFTGTVTEINPERGKVKV.

Belongs to the NusG family.

Functionally, participates in transcription elongation, termination and antitermination. The sequence is that of Transcription termination/antitermination protein NusG from Thermus thermophilus (strain ATCC 27634 / DSM 579 / HB8).